We begin with the raw amino-acid sequence, 326 residues long: Aspartate carbamoyltransferase catalytic subunit (326 aa).

Carbamoyl phosphate contacts are provided by R55 and T56. K83 is a binding site for L-aspartate. Carbamoyl phosphate-binding residues include R105, H135, and Q138. L-aspartate contacts are provided by R176 and R230. Residues G271 and P272 each contribute to the carbamoyl phosphate site.

It belongs to the aspartate/ornithine carbamoyltransferase superfamily. ATCase family. Heterododecamer (2C3:3R2) of six catalytic PyrB chains organized as two trimers (C3), and six regulatory PyrI chains organized as three dimers (R2).

It catalyses the reaction carbamoyl phosphate + L-aspartate = N-carbamoyl-L-aspartate + phosphate + H(+). It participates in pyrimidine metabolism; UMP biosynthesis via de novo pathway; (S)-dihydroorotate from bicarbonate: step 2/3. Catalyzes the condensation of carbamoyl phosphate and aspartate to form carbamoyl aspartate and inorganic phosphate, the committed step in the de novo pyrimidine nucleotide biosynthesis pathway. This Streptomyces coelicolor (strain ATCC BAA-471 / A3(2) / M145) protein is Aspartate carbamoyltransferase catalytic subunit.